Here is a 929-residue protein sequence, read N- to C-terminus: MTDYSKTVNLLESPFPMRGNLAKCEPAWLKSWYEQKRYQKLREIAKGRPKFILHDGPPYANGDIHIGHAVNKILKDIIIRSKTQAGFDAPYVPGWDCHGLPIEVMVEKLHGKDMPKARFRELCREYAAEQIARQKKDFIRLGVLGDWDNPYLTMDFKTEADTVRMLGEIYKSGYLYRGAKPVQFCLDCGSSLAEAEVEYKDKVSPAIDVAYPFKDTVALAAAFGLAGIEGKAFAVIWTTTPWTLPASQAVSAGADVVYQLIDTPKGKLVLAKDLAEGALKRYGFSDGIAILAETTGDKLENLHMNHPFLERDIPMLNGEHVTTDAGTGLVHTAPAHGLEDYAVCNKYGIELYNPVNAEGKYISETPRVAGMSVWEANPVILQWPEETGNLLASSKIEHSYAHCWRHKTPLIYRATGQWFVGMDKAGSDGKTLRDKAIKAVDDTEFFPPWGRARLESMIEGRPDWVVSRQRYWGTPMTFFVHKETGELHPNSAELLEKVAQRIEEKGIEAWFSLDKSELLSAEDCEHYDKLPDTMDVWFDSGSTHYSVVKQREELEWPADLYLEGSDQHRGWFQSSMLTGCASSMGRAPYKQLLTHGFVVDQNGRKMSKSIGNVVAPQEVYNEFGADILRLWAASTDYSGELAISKEILKRVTESYRRIRNTLSFLFANLSDFNPIEDAVPQAEMVEIDRYALVLARRLQERLAGGYYPRYAFHFAVKDIVSFCSEDLGAFYLDILKDRLYTTKADSRARRSAQTALYHITRSLVLLIAPILCFTGEEAWDIIGGGEEDSVLFHTWHEFPAINEKAEAELVKKWTAIREAREAVTAAIEPLRADKTVGSSLQAEAEITAPEEMAGYLNALGEELRFALLVSKAEVKVGDELAVAAKASDGEKCERCWHYTRDVGAVAGYETVCKRCAENVGGEGETRHYA.

The short motif at 58–68 is the 'HIGH' region element; that stretch reads PYANGDIHIGH. L-isoleucyl-5'-AMP is bound at residue E563. The 'KMSKS' region signature appears at 605–609; the sequence is KMSKS. K608 is an ATP binding site. Residues C892, C895, C912, and C915 each coordinate Zn(2+).

It belongs to the class-I aminoacyl-tRNA synthetase family. IleS type 1 subfamily. In terms of assembly, monomer. Zn(2+) serves as cofactor.

The protein resides in the cytoplasm. The enzyme catalyses tRNA(Ile) + L-isoleucine + ATP = L-isoleucyl-tRNA(Ile) + AMP + diphosphate. Its function is as follows. Catalyzes the attachment of isoleucine to tRNA(Ile). As IleRS can inadvertently accommodate and process structurally similar amino acids such as valine, to avoid such errors it has two additional distinct tRNA(Ile)-dependent editing activities. One activity is designated as 'pretransfer' editing and involves the hydrolysis of activated Val-AMP. The other activity is designated 'posttransfer' editing and involves deacylation of mischarged Val-tRNA(Ile). This chain is Isoleucine--tRNA ligase, found in Neisseria gonorrhoeae (strain NCCP11945).